The chain runs to 238 residues: 2-C-methyl-D-erythritol 4-phosphate cytidylyltransferase (238 aa).

Belongs to the IspD/TarI cytidylyltransferase family. IspD subfamily.

The catalysed reaction is 2-C-methyl-D-erythritol 4-phosphate + CTP + H(+) = 4-CDP-2-C-methyl-D-erythritol + diphosphate. Its pathway is isoprenoid biosynthesis; isopentenyl diphosphate biosynthesis via DXP pathway; isopentenyl diphosphate from 1-deoxy-D-xylulose 5-phosphate: step 2/6. Its function is as follows. Catalyzes the formation of 4-diphosphocytidyl-2-C-methyl-D-erythritol from CTP and 2-C-methyl-D-erythritol 4-phosphate (MEP). This chain is 2-C-methyl-D-erythritol 4-phosphate cytidylyltransferase, found in Acinetobacter baumannii (strain AYE).